The chain runs to 591 residues: MAEHDAPPESGAARSPPAKKRGGDARSPQQDAQPLSSRDRVRERDEDKDRERHRRHGEDRERYRDRESVRERGEGSRDRERHRREHREESRDRERHHREHREGSRDRERHHREHREGSRDRERHHREHREGSRDRERHHRDHREGSRDRERHHRDHRERSERREHRDRSDDRDYRRSCDRDAERRDRDRDGHRRHRSRSPLRSESQSKRMSGFDQRPSEAIPILAPDATPSQLPELPAANPGMFPNMLPNLVNVPALGQPLAMTQQATRHARRVYVGGLPPIANEQTVAVFFNQVMAAIGGNTFALGHAVVNVYINHDKKFAFVEMRSVEEASNAMALDGIMFEGAPVKVRRPTDYNPSQAAALGPSQPNPNLNLAAVGLTPGAGGGLEGPDRIFVGGLPYYFTEAQVRELLETFGPLRGFDIVKDKETGNSKGYAFCLYKDGTVTDIACAALNGIQLGDRTLTVRRANQGAEPRPEQENILLQAQQEAQMKRLVYEVGRTLTTKVVCLTQVVSADDLRDDEEYNDILEDMTLEGHKYVPHSTIAESFIIRPHAKFAIRPKLTEDTNLFHLDLTNHMFSSLPFCHVHVCSY.

The tract at residues M1–Q215 is disordered. A compositionally biased stretch (polar residues) spans S27–S36. Basic and acidic residues-rich tracts occupy residues S37–R79 and R157–G191. RRM domains lie at R272–D355 and D392–Q470.

Belongs to the splicing factor SR family.

The protein localises to the nucleus. Necessary for the splicing of pre-mRNA. In Triticum aestivum (Wheat), this protein is Splicing factor U2af large subunit A (U2AF65A).